The primary structure comprises 430 residues: 3-phosphoshikimate 1-carboxyvinyltransferase (430 aa).

Residues lysine 21, serine 22, and arginine 26 each contribute to the 3-phosphoshikimate site. Lysine 21 lines the phosphoenolpyruvate pocket. Phosphoenolpyruvate is bound by residues glycine 95 and arginine 123. 3-phosphoshikimate-binding residues include threonine 167, glutamine 169, aspartate 315, and lysine 342. Glutamine 169 contributes to the phosphoenolpyruvate binding site. The Proton acceptor role is filled by aspartate 315. 2 residues coordinate phosphoenolpyruvate: arginine 346 and arginine 390.

This sequence belongs to the EPSP synthase family. In terms of assembly, monomer.

It localises to the cytoplasm. It carries out the reaction 3-phosphoshikimate + phosphoenolpyruvate = 5-O-(1-carboxyvinyl)-3-phosphoshikimate + phosphate. It participates in metabolic intermediate biosynthesis; chorismate biosynthesis; chorismate from D-erythrose 4-phosphate and phosphoenolpyruvate: step 6/7. Functionally, catalyzes the transfer of the enolpyruvyl moiety of phosphoenolpyruvate (PEP) to the 5-hydroxyl of shikimate-3-phosphate (S3P) to produce enolpyruvyl shikimate-3-phosphate and inorganic phosphate. This chain is 3-phosphoshikimate 1-carboxyvinyltransferase, found in Endomicrobium trichonymphae.